Reading from the N-terminus, the 465-residue chain is Cysteine--tRNA ligase (465 aa).

C30 provides a ligand contact to Zn(2+). The 'HIGH' region signature appears at 32–42; sequence ITVYDYCHVGH. Zn(2+) contacts are provided by C214, H239, and E243. Residues 271–275 carry the 'KMSKS' region motif; that stretch reads KMSKS. ATP is bound at residue K274.

This sequence belongs to the class-I aminoacyl-tRNA synthetase family. Monomer. Requires Zn(2+) as cofactor.

It is found in the cytoplasm. The enzyme catalyses tRNA(Cys) + L-cysteine + ATP = L-cysteinyl-tRNA(Cys) + AMP + diphosphate. This chain is Cysteine--tRNA ligase, found in Burkholderia orbicola (strain MC0-3).